The primary structure comprises 35 residues: Potassium channel toxin (35 aa).

Intrachain disulfides connect cysteine 6/cysteine 25, cysteine 11/cysteine 30, and cysteine 15/cysteine 32.

The protein belongs to the short scorpion toxin superfamily. Potassium channel inhibitor family. Alpha-KTx 21 subfamily. In terms of tissue distribution, expressed by the venom gland.

Its subcellular location is the secreted. Its function is as follows. Toxin that blocks voltage-gated potassium channels (Kv). The protein is Potassium channel toxin of Tityus metuendus (Scorpion).